Reading from the N-terminus, the 227-residue chain is MTADGGARPRIRSYVLRAGRVGSGQARALVELGPRFVLPYQPELLDLDAVFARVAPRVLEIGFGMGEGLAETAASHPEIDYIGVEVHTPGVGALLKQLGERELGNVRVIQHDAVEVLTAMLAPATLAGIHIFFPDPWHKKRHHKRRLIQAPLVELLASRLAPGGYIHLATDWQDYAEQMLVVLEAEAQLENTAAAYVPRPDTRPLTKFEQRGIRLGHGVWDLVFRRR.

S-adenosyl-L-methionine contacts are provided by Glu-60, Glu-85, Asp-112, and Asp-135. Residue Asp-135 is part of the active site. Residues Lys-139, Asp-171, and 206 to 209 each bind substrate; that span reads TKFE.

This sequence belongs to the class I-like SAM-binding methyltransferase superfamily. TrmB family.

The enzyme catalyses guanosine(46) in tRNA + S-adenosyl-L-methionine = N(7)-methylguanosine(46) in tRNA + S-adenosyl-L-homocysteine. It functions in the pathway tRNA modification; N(7)-methylguanine-tRNA biosynthesis. Its function is as follows. Catalyzes the formation of N(7)-methylguanine at position 46 (m7G46) in tRNA. This is tRNA (guanine-N(7)-)-methyltransferase from Thiobacillus denitrificans (strain ATCC 25259 / T1).